A 78-amino-acid chain; its full sequence is Large ribosomal subunit protein bL28 (78 aa).

The tract at residues 1–24 (MSKVCQVTGKRPASGNNVSHAHNK) is disordered.

This sequence belongs to the bacterial ribosomal protein bL28 family.

This Nitrosococcus oceani (strain ATCC 19707 / BCRC 17464 / JCM 30415 / NCIMB 11848 / C-107) protein is Large ribosomal subunit protein bL28.